An 802-amino-acid chain; its full sequence is Exocyst complex component 6 (802 aa).

The protein belongs to the SEC15 family. In terms of assembly, the exocyst complex is composed of EXOC1, EXOC2, EXOC3, EXOC4, EXOC5, EXOC6, EXOC7 and EXOC8. Interacts with CNTRL. Interacts with RAB11A in a GTP-dependent manner.

Its subcellular location is the cytoplasm. It is found in the perinuclear region. The protein localises to the cell projection. It localises to the growth cone. The protein resides in the midbody. Its subcellular location is the midbody ring. Component of the exocyst complex involved in the docking of exocytic vesicles with fusion sites on the plasma membrane. Together with RAB11A, RAB3IP, RAB8A, PARD3, PRKCI, ANXA2, CDC42 and DNMBP promotes transcytosis of PODXL to the apical membrane initiation sites (AMIS), apical surface formation and lumenogenesis. This is Exocyst complex component 6 (Exoc6) from Mus musculus (Mouse).